The chain runs to 583 residues: Phosphoglucomutase, cytoplasmic 2 (583 aa).

2 residues coordinate alpha-D-glucose 1,6-bisphosphate: arginine 25 and serine 124. The active-site Phosphoserine intermediate is the serine 124. Residues serine 124, aspartate 300, aspartate 302, and aspartate 304 each contribute to the Mg(2+) site. Serine 124 carries the post-translational modification Phosphoserine. Residues aspartate 304, arginine 305, threonine 368, glutamate 387, serine 389, and lysine 400 each contribute to the alpha-D-glucose 1,6-bisphosphate site.

This sequence belongs to the phosphohexose mutase family. As to quaternary structure, monomer. Requires Mg(2+) as cofactor.

Its subcellular location is the cytoplasm. The enzyme catalyses alpha-D-glucose 1-phosphate = alpha-D-glucose 6-phosphate. It carries out the reaction O-phospho-L-seryl-[protein] + alpha-D-glucose 1-phosphate = alpha-D-glucose 1,6-bisphosphate + L-seryl-[protein]. It catalyses the reaction alpha-D-glucose 1,6-bisphosphate + L-seryl-[protein] = O-phospho-L-seryl-[protein] + alpha-D-glucose 6-phosphate. In terms of biological role, catalyzes the reversible isomerization of alpha-D-glucose 1-phosphate to alpha-D-glucose 6-phosphate. The mechanism proceeds via the intermediate compound alpha-D-glucose 1,6-bisphosphate. This enzyme participates in both the breakdown and synthesis of glucose. This chain is Phosphoglucomutase, cytoplasmic 2, found in Zea mays (Maize).